The primary structure comprises 656 residues: Macrolide export ATP-binding/permease protein MacB (656 aa).

One can recognise an ABC transporter domain in the interval 6–244 (LEVSACYRSF…VKAQVDMSLA (239 aa)). Residue 42 to 49 (GASGSGKS) coordinates ATP. Transmembrane regions (helical) follow at residues 277–297 (FLTM…VALG), 531–551 (LLIS…VMNI), 586–606 (LVCL…GVVF), and 621–641 (SIVA…FLPA).

It belongs to the ABC transporter superfamily. Macrolide exporter (TC 3.A.1.122) family. In terms of assembly, homodimer. Part of the tripartite efflux system MacAB-TolC, which is composed of an inner membrane transporter, MacB, a periplasmic membrane fusion protein, MacA, and an outer membrane component, TolC. The complex forms a large protein conduit and can translocate molecules across both the inner and outer membranes. Interacts with MacA.

The protein localises to the cell inner membrane. In terms of biological role, part of the tripartite efflux system MacAB-TolC. MacB is a non-canonical ABC transporter that contains transmembrane domains (TMD), which form a pore in the inner membrane, and an ATP-binding domain (NBD), which is responsible for energy generation. Confers resistance against macrolides. The protein is Macrolide export ATP-binding/permease protein MacB of Shewanella oneidensis (strain ATCC 700550 / JCM 31522 / CIP 106686 / LMG 19005 / NCIMB 14063 / MR-1).